The sequence spans 422 residues: Adenylosuccinate synthetase (422 aa).

GTP-binding positions include 11–17 (GDEGKGK) and 39–41 (GHT). Aspartate 12 serves as the catalytic Proton acceptor. Mg(2+) contacts are provided by aspartate 12 and glycine 39. Residues 12 to 15 (DEGK), 37 to 40 (NAGH), threonine 129, arginine 143, asparagine 219, threonine 234, and arginine 298 each bind IMP. Residue histidine 40 is the Proton donor of the active site. 294–300 (VTTGRRR) contributes to the substrate binding site. GTP contacts are provided by residues arginine 300, 326-328 (KLD), and 409-411 (GTG).

It belongs to the adenylosuccinate synthetase family. In terms of assembly, homodimer. The cofactor is Mg(2+).

It localises to the cytoplasm. It catalyses the reaction IMP + L-aspartate + GTP = N(6)-(1,2-dicarboxyethyl)-AMP + GDP + phosphate + 2 H(+). It participates in purine metabolism; AMP biosynthesis via de novo pathway; AMP from IMP: step 1/2. Plays an important role in the de novo pathway and in the salvage pathway of purine nucleotide biosynthesis. Catalyzes the first committed step in the biosynthesis of AMP from IMP. The sequence is that of Adenylosuccinate synthetase from Ajellomyces capsulatus (strain H143) (Darling's disease fungus).